The chain runs to 840 residues: Probable inorganic carbon transporter subunit DabA (840 aa).

C355, D357, H539, and C554 together coordinate Zn(2+).

This sequence belongs to the inorganic carbon transporter (TC 9.A.2) DabA family. Forms a complex with DabB. It depends on Zn(2+) as a cofactor.

It localises to the cell membrane. Its function is as follows. Part of an energy-coupled inorganic carbon pump. In Roseiflexus castenholzii (strain DSM 13941 / HLO8), this protein is Probable inorganic carbon transporter subunit DabA.